Consider the following 247-residue polypeptide: MPPKGWRKNTEGQYPQPNKDQDLVSIDEILFPRATVQKLAKNIMNASSDEGASNMILAKDSMIALQRSSTVFVSHLMFQARQISKDEGRKTINAQDILSALEKAEFSGFIPEVKQKLSVFESNIALRKKHKADKKVPKPEGVDASPSSKRLKDNDEQIIQRDNSADMEDDPEAEADEDITEELANDEDTNNKESKEEEEADEELDDEKDGEEVEENPIALLSREEDELRGEEAADEDEGQNSSDDDS.

The segment at 128–247 is disordered; that stretch reads KKHKADKKVP…EGQNSSDDDS (120 aa). The segment covering 150–159 has biased composition (basic and acidic residues); that stretch reads RLKDNDEQII. 3 stretches are compositionally biased toward acidic residues: residues 165-188, 196-215, and 224-247; these read ADMEDDPEAEADEDITEELANDED, EEEEADEELDDEKDGEEVEE, and EEDELRGEEAADEDEGQNSSDDDS.

Heterotetramer. Consists of four subunits: POL2, DPB2, DPB3 and DPB4.

The protein resides in the nucleus. Functionally, as accessory component of the DNA polymerase epsilon (DNA polymerase II) participates in chromosomal DNA replication. This chain is DNA polymerase epsilon subunit D (DPB4), found in Debaryomyces hansenii (strain ATCC 36239 / CBS 767 / BCRC 21394 / JCM 1990 / NBRC 0083 / IGC 2968) (Yeast).